Here is a 232-residue protein sequence, read N- to C-terminus: tRNA (guanine-N(7)-)-methyltransferase (232 aa).

The S-adenosyl-L-methionine site is built by Glu63, Glu88, Asp115, and Asp137. Residue Asp137 is part of the active site. Substrate is bound by residues Lys141, Asp173, and 211-214 (TRYE).

The protein belongs to the class I-like SAM-binding methyltransferase superfamily. TrmB family.

It catalyses the reaction guanosine(46) in tRNA + S-adenosyl-L-methionine = N(7)-methylguanosine(46) in tRNA + S-adenosyl-L-homocysteine. The protein operates within tRNA modification; N(7)-methylguanine-tRNA biosynthesis. In terms of biological role, catalyzes the formation of N(7)-methylguanine at position 46 (m7G46) in tRNA. This chain is tRNA (guanine-N(7)-)-methyltransferase, found in Chelativorans sp. (strain BNC1).